Consider the following 172-residue polypeptide: Interferon tau-3 (172 aa).

Disulfide bonds link C1–C99 and C29–C139.

Belongs to the alpha/beta interferon family. IFN-alphaII subfamily. In terms of tissue distribution, constitutively and exclusively expressed in the mononuclear cells of the extraembryonic trophectoderm.

It is found in the secreted. Functionally, paracrine hormone primarily responsible for maternal recognition of pregnancy. Interacts with endometrial receptors, probably type I interferon receptors, and blocks estrogen receptor expression, preventing the estrogen-induced increase in oxytocin receptor expression in the endometrium. This results in the suppression of the pulsatile endometrial release of the luteolytic hormone prostaglandin F2-alpha, hindering the regression of the corpus luteum (luteolysis) and therefore a return to ovarian cyclicity. This, and a possible direct effect of IFN-tau on prostaglandin synthesis, leads in turn to continued ovarian progesterone secretion, which stimulates the secretion by the endometrium of the nutrients required for the growth of the conceptus. In summary, displays particularly high antiviral and antiproliferative potency concurrently with particular weak cytotoxicity, high antiluteolytic activity and immunomodulatory properties. In contrast with other IFNs, IFN-tau is not virally inducible. This Ovis aries (Sheep) protein is Interferon tau-3 (IFNT3).